The chain runs to 152 residues: MKSPDEVLREGELEKRSDSLFQLWKKKRGVLTSDRLSLFPASPRARPKELRFHSILKVDCVERTGKYVYFTIVTTDHKEIDFRCAGESCWNAAIALALIDFQNRRALQDFRSRQERTAPAAPAEDAVAAAAAAPSEPSEPSRPSPQPKPRTP.

Residues serine 3 and serine 42 each carry the phosphoserine modification. Positions 7–99 constitute a PH domain; it reads VLREGELEKR…WNAAIALALI (93 aa). Residues 112–152 are disordered; that stretch reads SRQERTAPAAPAEDAVAAAAAAPSEPSEPSRPSPQPKPRTP. Low complexity predominate over residues 118 to 138; that stretch reads APAAPAEDAVAAAAAAPSEPS. Positions 140 to 152 are enriched in pro residues; sequence PSRPSPQPKPRTP. Serine 141 and serine 144 each carry phosphoserine. Threonine 151 is subject to Phosphothreonine.

This sequence belongs to the PHLDA2 family. Expressed in placenta and adult prostate gland. In placenta, it is present in all cells of the villous cytotrophoblast. The protein is absent in cells from hydatidiform moles. Hydatidiform mole is a gestation characterized by abnormal development of both fetus and trophoblast. The majority of hydatidiform moles are associated with an excess of paternal to maternal genomes and are likely to result from the abnormal expression of imprinted genes (at protein level). Expressed at low levels in adult liver and lung, and fetal liver. Expressed in adult brain and neuroblastoma, medullablastoma and glioblastoma cell lines.

It is found in the cytoplasm. Its subcellular location is the membrane. Functionally, plays a role in regulating placenta growth. May act via its PH domain that competes with other PH domain-containing proteins, thereby preventing their binding to membrane lipids. This chain is Pleckstrin homology-like domain family A member 2 (PHLDA2), found in Homo sapiens (Human).